The following is a 618-amino-acid chain: Dihydroxy-acid dehydratase (618 aa).

Position 81 (aspartate 81) interacts with Mg(2+). [2Fe-2S] cluster is bound at residue cysteine 122. Mg(2+) is bound by residues aspartate 123 and lysine 124. An N6-carboxylysine modification is found at lysine 124. Cysteine 195 contributes to the [2Fe-2S] cluster binding site. Mg(2+) is bound at residue glutamate 491. The active-site Proton acceptor is the serine 517.

This sequence belongs to the IlvD/Edd family. In terms of assembly, homodimer. It depends on [2Fe-2S] cluster as a cofactor. Mg(2+) serves as cofactor.

The catalysed reaction is (2R)-2,3-dihydroxy-3-methylbutanoate = 3-methyl-2-oxobutanoate + H2O. It carries out the reaction (2R,3R)-2,3-dihydroxy-3-methylpentanoate = (S)-3-methyl-2-oxopentanoate + H2O. Its pathway is amino-acid biosynthesis; L-isoleucine biosynthesis; L-isoleucine from 2-oxobutanoate: step 3/4. It functions in the pathway amino-acid biosynthesis; L-valine biosynthesis; L-valine from pyruvate: step 3/4. Its function is as follows. Functions in the biosynthesis of branched-chain amino acids. Catalyzes the dehydration of (2R,3R)-2,3-dihydroxy-3-methylpentanoate (2,3-dihydroxy-3-methylvalerate) into 2-oxo-3-methylpentanoate (2-oxo-3-methylvalerate) and of (2R)-2,3-dihydroxy-3-methylbutanoate (2,3-dihydroxyisovalerate) into 2-oxo-3-methylbutanoate (2-oxoisovalerate), the penultimate precursor to L-isoleucine and L-valine, respectively. The protein is Dihydroxy-acid dehydratase of Rhodopseudomonas palustris (strain ATCC BAA-98 / CGA009).